The primary structure comprises 257 residues: 5-oxoprolinase subunit A (257 aa).

Belongs to the LamB/PxpA family. In terms of assembly, forms a complex composed of PxpA, PxpB and PxpC.

It carries out the reaction 5-oxo-L-proline + ATP + 2 H2O = L-glutamate + ADP + phosphate + H(+). Catalyzes the cleavage of 5-oxoproline to form L-glutamate coupled to the hydrolysis of ATP to ADP and inorganic phosphate. The protein is 5-oxoprolinase subunit A of Pectobacterium atrosepticum (strain SCRI 1043 / ATCC BAA-672) (Erwinia carotovora subsp. atroseptica).